We begin with the raw amino-acid sequence, 576 residues long: MNIQALLSDKVSQALIAAGAPADCEAQVRQSAKAQFGDYQANGVMAVAKKLGMQPRQLAERVVELLDLTGIASKIEIAGPGFINIFLDRQWVAEKVEYALTAPKLGVTPVEPQTIVVDYSAPNVAKQMHVGHLRSTIIGDAAVRTLAFLGHNVIRANHVGDWGTQFGMLIAYLEKMQNENASDMGLSDLELFYQQAKKTYDEDEEFALRARAYVVKLQSGDEYCRQMWRKLVDITMAQNQVAYDRLNVTLTKDDVMGESLYNAMLPEIVADLKAKGLAVESEGATVVYLDEYKNKDGEPMGVIIQKKDGGYLYTTTDIACAKYRYETLGADRILYYIDSRQHQHLMQAWTIVRKAGYVPESVPLEHHMFGMMLGKDGKPFKTRSGGTVKLSDLLDEAVERAGKLIAEKNPDMPADELKQVINAVGIGAVKYADLSKSRTTDYIFDWDNMLALDGNTAPYMQYAYTRVVSVFRRAGVDESSLTLPLVITEDREAALATRLLQFEEIITTVAREGTPHVMCSYLYDLAGLFSSFYEHCQILNAESEEIRQSRLKLAMLTAKTLKQGLDTLGIQTVERM.

Residues 122–132 carry the 'HIGH' region motif; the sequence is PNVAKQMHVGH.

This sequence belongs to the class-I aminoacyl-tRNA synthetase family. Monomer.

The protein resides in the cytoplasm. The catalysed reaction is tRNA(Arg) + L-arginine + ATP = L-arginyl-tRNA(Arg) + AMP + diphosphate. This Yersinia pseudotuberculosis serotype O:3 (strain YPIII) protein is Arginine--tRNA ligase.